A 247-amino-acid chain; its full sequence is Isoprenyl transferase (247 aa).

Residue Asp18 is part of the active site. Asp18 contributes to the Mg(2+) binding site. Substrate is bound by residues 19–22 (GNGR), Trp23, Arg31, His35, and 63–65 (SSE). Asn66 acts as the Proton acceptor in catalysis. Substrate-binding positions include Trp67, Arg69, Arg186, and 192–194 (RLS). Mg(2+) is bound at residue Glu205.

The protein belongs to the UPP synthase family. In terms of assembly, homodimer. It depends on Mg(2+) as a cofactor.

Its function is as follows. Catalyzes the condensation of isopentenyl diphosphate (IPP) with allylic pyrophosphates generating different type of terpenoids. This chain is Isoprenyl transferase, found in Rhizobium meliloti (strain 1021) (Ensifer meliloti).